Reading from the N-terminus, the 260-residue chain is Hydroxyethylthiazole kinase 1 (260 aa).

Met-39 lines the substrate pocket. ATP-binding residues include Arg-115 and Thr-160. Gly-187 is a substrate binding site.

The protein belongs to the Thz kinase family. Mg(2+) serves as cofactor.

The enzyme catalyses 5-(2-hydroxyethyl)-4-methylthiazole + ATP = 4-methyl-5-(2-phosphooxyethyl)-thiazole + ADP + H(+). The protein operates within cofactor biosynthesis; thiamine diphosphate biosynthesis; 4-methyl-5-(2-phosphoethyl)-thiazole from 5-(2-hydroxyethyl)-4-methylthiazole: step 1/1. Catalyzes the phosphorylation of the hydroxyl group of 4-methyl-5-beta-hydroxyethylthiazole (THZ). This Streptococcus pneumoniae (strain Taiwan19F-14) protein is Hydroxyethylthiazole kinase 1.